The primary structure comprises 268 residues: Glucosamine-6-phosphate deaminase (268 aa).

Catalysis depends on Asp72, which acts as the Proton acceptor; for enolization step. The active-site For ring-opening step is the Asp141. Catalysis depends on His143, which acts as the Proton acceptor; for ring-opening step. Residue Glu148 is the For ring-opening step of the active site.

Belongs to the glucosamine/galactosamine-6-phosphate isomerase family. NagB subfamily.

It carries out the reaction alpha-D-glucosamine 6-phosphate + H2O = beta-D-fructose 6-phosphate + NH4(+). Its pathway is amino-sugar metabolism; N-acetylneuraminate degradation; D-fructose 6-phosphate from N-acetylneuraminate: step 5/5. Its activity is regulated as follows. Allosterically activated by N-acetylglucosamine 6-phosphate (GlcNAc6P). In terms of biological role, catalyzes the reversible isomerization-deamination of glucosamine 6-phosphate (GlcN6P) to form fructose 6-phosphate (Fru6P) and ammonium ion. This is Glucosamine-6-phosphate deaminase from Borreliella afzelii (strain PKo) (Borrelia afzelii).